The chain runs to 713 residues: Probable glutamate carboxypeptidase VP8 (713 aa).

Topologically, residues 1-10 (MPHSVLARLP) are cytoplasmic. A helical; Signal-anchor for type II membrane protein membrane pass occupies residues 11–31 (PGSVRLVAAFGLLLLVSLLVL). Residues 32–713 (HRRPGRPHVA…PTNFSSLVTP (682 aa)) lie on the Extracellular side of the membrane. N-linked (GlcNAc...) asparagine glycans are attached at residues N66 and N311. Residues 245 to 539 (ATSGAERLKF…EIWGLLALRL (295 aa)) are catalytic. Residues H345 and D355 each coordinate Zn(2+). E392 (nucleophile) is an active-site residue. Zn(2+) is bound by residues E393, D421, and H505. N-linked (GlcNAc...) asparagine glycosylation is found at N667 and N706.

It belongs to the peptidase M28 family. M28B subfamily. Requires Zn(2+) as cofactor.

The protein resides in the cell membrane. It catalyses the reaction Release of an unsubstituted, C-terminal glutamyl residue, typically from Ac-Asp-Glu or folylpoly-gamma-glutamates.. In terms of biological role, involved in the regulation of meristem development and seed maturation processes. Mediates regulation of embryonic regulatory genes and genes controlling abscisic acid (ABA) biosynthesis and turnover in developing seeds. May be required for the synthesis of small signaling molecules that integrates meristem and embryo formation in seeds. This is Probable glutamate carboxypeptidase VP8 from Zea mays (Maize).